The following is a 215-amino-acid chain: UPF0488 protein C8orf33 homolog (215 aa).

Disordered stretches follow at residues 1-72 (MLED…DEQL), 87-111 (LRTQKTSSKQREEASRALKTLRSSK), and 158-199 (CKPV…DTKP). Residues 29–39 (AKKHKKKKKKK) are compositionally biased toward basic residues. Positions 40-63 (AGEGKDDQQRETKTTEGETAKQET) are enriched in basic and acidic residues. 2 stretches are compositionally biased toward basic and acidic residues: residues 167-178 (ERNTQPKNKTDG) and 188-199 (TNEHTKTEDTKP).

This sequence belongs to the UPF0488 family.

The sequence is that of UPF0488 protein C8orf33 homolog from Danio rerio (Zebrafish).